The following is a 433-amino-acid chain: Pyrimidine-nucleoside phosphorylase (433 aa).

A phosphate-binding site is contributed by 81–83 (KHS). The K(+) site is built by glycine 88 and threonine 90. Phosphate contacts are provided by residues threonine 92, 108–110 (KMS), and threonine 120. Substrate is bound by residues arginine 168 and lysine 187. Residues leucine 243, alanine 246, and glutamate 255 each coordinate K(+).

This sequence belongs to the thymidine/pyrimidine-nucleoside phosphorylase family. In terms of assembly, homodimer. K(+) is required as a cofactor.

The enzyme catalyses uridine + phosphate = alpha-D-ribose 1-phosphate + uracil. The catalysed reaction is thymidine + phosphate = 2-deoxy-alpha-D-ribose 1-phosphate + thymine. It catalyses the reaction 2'-deoxyuridine + phosphate = 2-deoxy-alpha-D-ribose 1-phosphate + uracil. Its function is as follows. Catalyzes phosphorolysis of the pyrimidine nucleosides uridine, thymidine and 2'-deoxyuridine with the formation of the corresponding pyrimidine base and ribose-1-phosphate. This Staphylococcus aureus (strain Mu50 / ATCC 700699) protein is Pyrimidine-nucleoside phosphorylase (pdp).